The chain runs to 491 residues: Ketol-acid reductoisomerase (NADP(+)) (491 aa).

In terms of domain architecture, KARI N-terminal Rossmann spans 15-208 (AQLGKCRFMA…GGHRAGVLES (194 aa)). Residues 45-48 (CGAQ), Arg68, Arg76, Ser78, and 108-110 (DKQ) contribute to the NADP(+) site. His132 is an active-site residue. An NADP(+)-binding site is contributed by Gly158. KARI C-terminal knotted domains are found at residues 209-344 (SFVA…NAPQ) and 345-484 (FEGK…MTDM). Mg(2+) is bound by residues Asp217, Glu221, Glu389, and Glu393. Residue Ser414 coordinates substrate.

This sequence belongs to the ketol-acid reductoisomerase family. Mg(2+) is required as a cofactor.

It catalyses the reaction (2R)-2,3-dihydroxy-3-methylbutanoate + NADP(+) = (2S)-2-acetolactate + NADPH + H(+). It carries out the reaction (2R,3R)-2,3-dihydroxy-3-methylpentanoate + NADP(+) = (S)-2-ethyl-2-hydroxy-3-oxobutanoate + NADPH + H(+). It participates in amino-acid biosynthesis; L-isoleucine biosynthesis; L-isoleucine from 2-oxobutanoate: step 2/4. It functions in the pathway amino-acid biosynthesis; L-valine biosynthesis; L-valine from pyruvate: step 2/4. Its function is as follows. Involved in the biosynthesis of branched-chain amino acids (BCAA). Catalyzes an alkyl-migration followed by a ketol-acid reduction of (S)-2-acetolactate (S2AL) to yield (R)-2,3-dihydroxy-isovalerate. In the isomerase reaction, S2AL is rearranged via a Mg-dependent methyl migration to produce 3-hydroxy-3-methyl-2-ketobutyrate (HMKB). In the reductase reaction, this 2-ketoacid undergoes a metal-dependent reduction by NADPH to yield (R)-2,3-dihydroxy-isovalerate. The polypeptide is Ketol-acid reductoisomerase (NADP(+)) (Serratia proteamaculans (strain 568)).